The primary structure comprises 742 residues: Synaptic vesicle glycoprotein 2A (742 aa).

Positions 1–57 (MEEGFRDRAAFIRGAKDIAKEVKKHATKKVVKGLDRVQDEYSRRSYSRFEEEDDDDD) are interaction with SYT1. Topologically, residues 1–169 (MEEGFRDRAA…GHGRFQWTLY (169 aa)) are cytoplasmic. Residues 32 to 49 (KGLDRVQDEYSRRSYSRF) are compositionally biased toward basic and acidic residues. A disordered region spans residues 32–144 (KGLDRVQDEY…GRGEAQRRKE (113 aa)). A phosphoserine mark is found at Ser80 and Ser81. Residue Thr84 is modified to Phosphothreonine. Residues 122–137 (VRGGLGDGEGPPGGRG) show a composition bias toward gly residues. A helical membrane pass occupies residues 170-190 (FVLGLALMADGVEVFVVGFVL). The Extracellular portion of the chain corresponds to 191-205 (PSAEKDMCLSDSNKG). The helical transmembrane segment at 206–226 (MLGLIVYLGMMVGAFLWGGLA) threads the bilayer. Over 227–233 (DRLGRRQ) the chain is Cytoplasmic. The helical transmembrane segment at 234–254 (CLLISLSVNSVFAFFSSFVQG) threads the bilayer. Residues 255 to 262 (YGTFLFCR) are Extracellular-facing. Residues 263-283 (LLSGVGIGGSIPIVFSYFSEF) form a helical membrane-spanning segment. Residues 284–294 (LAQEKRGEHLS) are Cytoplasmic-facing. A helical membrane pass occupies residues 295 to 315 (WLCMFWMIGGVYAAAMAWAII). The Extracellular segment spans residues 316–334 (PHYGWSFQMGSAYQFHSWR). A helical membrane pass occupies residues 335–355 (VFVLVCAFPSVFAIGALTTQP). At 356–447 (ESPRFFLENG…CFGPEYRRIT (92 aa)) the chain is on the cytoplasmic side. Ser393 bears the Phosphoserine mark. Residues 448–468 (LMMMGVWFTMSFSYYGLTVWF) form a helical membrane-spanning segment. The Extracellular segment spans residues 469-598 (PDMIRHLQAV…GTGEGAYMVY (130 aa)). Phosphotyrosine is present on Tyr480. N-linked (GlcNAc...) asparagine glycans are attached at residues Asn498, Asn548, and Asn573. The chain crosses the membrane as a helical span at residues 599–619 (FVSFLGTLAVLPGNIVSALLM). Residues 620–626 (DKIGRLR) lie on the Cytoplasmic side of the membrane. The helical transmembrane segment at 627–647 (MLAGSSVMSCVSCFFLSFGNS) threads the bilayer. Residues 648-651 (ESAM) lie on the Extracellular side of the membrane. Residues 652–672 (IALLCLFGGVSIASWNALDVL) form a helical membrane-spanning segment. Residues 673-685 (TVELYPSDKRTTA) are Cytoplasmic-facing. Residues 686–708 (FGFLNALCKLAAVLGISIFTSFV) form a helical membrane-spanning segment. The Extracellular segment spans residues 709–712 (GITK). Residues 713–731 (AAPILFASAALALGSSLAL) traverse the membrane as a helical segment. The Cytoplasmic portion of the chain corresponds to 732–742 (KLPETRGQVLQ).

Belongs to the major facilitator superfamily. As to quaternary structure, interacts with SYT1/synaptotagmin-1 in a calcium-dependent manner. Binds the adapter protein complex AP-2. Phosphorylation by CK1 of the N-terminal cytoplasmic domain regulates interaction with SYT1. In terms of processing, N-glycosylated.

Its subcellular location is the presynapse. It is found in the cytoplasmic vesicle. The protein localises to the secretory vesicle. The protein resides in the synaptic vesicle membrane. Functionally, plays a role in the control of regulated secretion in neural and endocrine cells, enhancing selectively low-frequency neurotransmission. Positively regulates vesicle fusion by maintaining the readily releasable pool of secretory vesicles. This Bos taurus (Bovine) protein is Synaptic vesicle glycoprotein 2A (SV2A).